The following is a 597-amino-acid chain: Elongation factor 4 (597 aa).

The tr-type G domain maps to 2-184; sequence NNIRNFSIIA…SLITKVPPPK (183 aa). GTP contacts are provided by residues 14–19 and 131–134; these read DHGKST and NKID.

This sequence belongs to the TRAFAC class translation factor GTPase superfamily. Classic translation factor GTPase family. LepA subfamily.

It localises to the cell inner membrane. The catalysed reaction is GTP + H2O = GDP + phosphate + H(+). Its function is as follows. Required for accurate and efficient protein synthesis under certain stress conditions. May act as a fidelity factor of the translation reaction, by catalyzing a one-codon backward translocation of tRNAs on improperly translocated ribosomes. Back-translocation proceeds from a post-translocation (POST) complex to a pre-translocation (PRE) complex, thus giving elongation factor G a second chance to translocate the tRNAs correctly. Binds to ribosomes in a GTP-dependent manner. This is Elongation factor 4 from Janthinobacterium sp. (strain Marseille) (Minibacterium massiliensis).